A 406-amino-acid chain; its full sequence is Peptide transporter imqD (406 aa).

The tract at residues 1–25 is disordered; it reads MTAPADSTEKSETSETTTLQTTEVS. Residues 14-25 are compositionally biased toward low complexity; it reads SETTTLQTTEVS. Transmembrane regions (helical) follow at residues 184-204, 220-240, 262-282, 309-329, 344-364, and 373-393; these read GLVACRVILGFILFFTCLSQA, IPNDTITAMNPIFCVIMGPVI, ATGFIMMSASMAFAAGVQKII, VFLQTPTYIILAVAEIFSFVT, AVVQALGQLGAAAGSAIGIAI, and LIWMYTGLAVAMFLVAVVFWI.

Belongs to the major facilitator superfamily. Proton-dependent oligopeptide transporter (POT/PTR) (TC 2.A.17) family.

The protein localises to the membrane. Functionally, peptide transporter; part of the gene cluster that mediates the biosynthesis of imizoquins A to D, tripeptide-derived alkaloids that serve a protective role against oxidative stress that are essential for normal germination. This chain is Peptide transporter imqD, found in Aspergillus flavus (strain ATCC 200026 / FGSC A1120 / IAM 13836 / NRRL 3357 / JCM 12722 / SRRC 167).